The primary structure comprises 427 residues: Histidine--tRNA ligase (427 aa).

The protein belongs to the class-II aminoacyl-tRNA synthetase family. As to quaternary structure, homodimer.

It is found in the cytoplasm. It catalyses the reaction tRNA(His) + L-histidine + ATP = L-histidyl-tRNA(His) + AMP + diphosphate + H(+). The polypeptide is Histidine--tRNA ligase (Lacticaseibacillus casei (strain BL23) (Lactobacillus casei)).